The primary structure comprises 683 residues: MDFTTMTMASNMATSTTTTATSAHASINSSSNFNIDIDSNQNTPSILINNNSDSSNGKNTDFNGVNNIHQKNIMNNTNNVHLYSPNIMDQTLLTPQDIAKLRRESIAHSQGMGGVSWGSISVGSWLRDEIISRRNSIVPASANGAASAAASATTTATNTLQIQQPTKRPSVSNPPYHRGYSISPQIAYTAYLPNLEKQYCKDYSCCGLSLPGLHDLLRHYEEAHISTSPNTTNMSQIPMNSAGNTSSSVRMTNNTSSANYNLQNNMAANTKNAGHKTNTMQAHSSNATNNTSINNMHANLQSNMDSNSTIRQSQHPHHQQNIIQQQLQSNSVNHTSGAVPTPSVMGSATASSTTANPNVISITGAPNSGLSMANHSQQLHLNGNLVDAVSTNDVFLRTSNSPSRHVPHNKQINSNNNSGININNNTSHNSNINMGSKNAMVNRPHTFNNYSLNKTSRNPIQHQSRKIDPHQTDLSPLVLVQDIDLSFMDDDILGPSNHNSMNSVVNPTTGSHNYNTFHSSVHAKSSQNMVEDQDIDDIDDDDDVDDDDDDDDDDDTENGSSSNGKSVHNNNYKMPQQAYIDDPARRLYVMDHEEQKPFKCPVIGCEKTYKNQNGLKYHRLHGHQNQKLHENPDGTFSVIDPDSTDSFGDGMGSAKDKPYRCEVCGKRYKNLNGLKYHRGHSTH.

Disordered regions lie at residues 156-178 (ATNTLQIQQPTKRPSVSNPPYHR), 305-324 (DSNSTIRQSQHPHHQQNIIQ), 332-357 (VNHTSGAVPTPSVMGSATASSTTANP), 399-420 (SNSPSRHVPHNKQINSNNNSGI), 498-517 (HNSMNSVVNPTTGSHNYNTF), and 535-573 (IDDIDDDDDVDDDDDDDDDDDTENGSSSNGKSVHNNNYK). Residues 160–173 (LQIQQPTKRPSVSN) show a composition bias toward polar residues. The prion domain (PrD) stretch occupies residues 230–458 (NTTNMSQIPM…NYSLNKTSRN (229 aa)). A compositionally biased stretch (acidic residues) spans 535–557 (IDDIDDDDDVDDDDDDDDDDDTE). The segment covering 558–573 (NGSSSNGKSVHNNNYK) has biased composition (polar residues). 2 C2H2-type zinc fingers span residues 598–623 (FKCPVIGCEKTYKNQNGLKYHRLHGH) and 659–683 (YRCEVCGKRYKNLNGLKYHRGHSTH).

In terms of assembly, interacts with the target of rapamycin complex 1 (TORC1) in a rapamycin-dependent manner. Interacts with MRS6. In terms of processing, phosphorylated by TORC1 kinase at multiple sites. Phosphorylation regulates nuclear localization and RP promoter binding.

Its subcellular location is the cytoplasm. It localises to the nucleus. Its function is as follows. Transcription factor that regulates ribosomal protein (RP) and ribosome biogenesis (Ribi) gene expression in response to nutrients and stress. Promotes RP gene expression under optimal growth conditions. Leaves the nucleus upon environmental challenges, resulting in a down-regulation of RP gene transcription. The effect of the environmental cues on SFP1 localization is mediated through the TOR pathway. Also regulates the expression of genes involved in the G2/M transition during the mitotic cell cycle and the DNA-damage response. Required for carbon-source modulation of cell size. This Saccharomyces cerevisiae (strain ATCC 204508 / S288c) (Baker's yeast) protein is Transcription factor SFP1 (SFP1).